Here is a 359-residue protein sequence, read N- to C-terminus: Guanine nucleotide-binding protein-like alpha-11 subunit (359 aa).

Gly2 carries N-myristoyl glycine lipidation. Residues 29–359 (KLIKILMMGN…YVKKILEDTI (331 aa)) form the G-alpha domain. Residues 32–45 (KILMMGNENSAKST) are G1 motif. Residue Ser44 coordinates Mg(2+). A G2 motif region spans residues 176–185 (DIIRCSKNNQ). Residues 178-185 (IRCSKNNQ), 204-208 (DTGNQ), and 281-284 (NKKE) contribute to the GTP site. A G3 motif region spans residues 200-209 (FVFVDTGNQK). The G4 motif stretch occupies residues 277–284 (IVLFNKKE). The G5 motif stretch occupies residues 337-342 (FNSSDT).

It belongs to the G-alpha family.

This is Guanine nucleotide-binding protein-like alpha-11 subunit (gpaK) from Dictyostelium discoideum (Social amoeba).